The chain runs to 154 residues: uncharacterized protein (154 aa).

This is an uncharacterized protein from Schizosaccharomyces pombe (strain 972 / ATCC 24843) (Fission yeast).